Here is a 1253-residue protein sequence, read N- to C-terminus: Guanine nucleotide exchange factor SDC25 (1253 aa).

In terms of domain architecture, SH3 spans 26–98 (QPIDVVECTY…PPSFTRSILN (73 aa)). A disordered region spans residues 624-649 (LNLDNAKDKKNGSQNTDIQEEEDEYE). The region spanning 782 to 914 (GPIVRIKGGS…ELLKEVNQKF (133 aa)) is the N-terminal Ras-GEF domain. Positions 952–1199 (VDPVLFATQL…QYQLSLIIEP (248 aa)) constitute a Ras-GEF domain. The tract at residues 1202–1253 (RKKVVPNSNSNNKSQEKSRDDQTDEGKTSTKKDRFPKFQLHKTKKKAPKVSK) is disordered. A compositionally biased stretch (basic and acidic residues) spans 1215–1237 (SQEKSRDDQTDEGKTSTKKDRFP). Over residues 1240 to 1253 (QLHKTKKKAPKVSK) the composition is skewed to basic residues.

In terms of biological role, promotes the exchange of Ras-bound GDP by GTP. The chain is Guanine nucleotide exchange factor SDC25 (SDC25) from Saccharomyces cerevisiae (Baker's yeast).